The following is a 301-amino-acid chain: 33 kDa chaperonin (301 aa).

2 disulfide bridges follow: cysteine 244–cysteine 246 and cysteine 277–cysteine 280.

This sequence belongs to the HSP33 family. In terms of processing, under oxidizing conditions two disulfide bonds are formed involving the reactive cysteines. Under reducing conditions zinc is bound to the reactive cysteines and the protein is inactive.

Its subcellular location is the cytoplasm. In terms of biological role, redox regulated molecular chaperone. Protects both thermally unfolding and oxidatively damaged proteins from irreversible aggregation. Plays an important role in the bacterial defense system toward oxidative stress. The polypeptide is 33 kDa chaperonin (Geobacter sulfurreducens (strain ATCC 51573 / DSM 12127 / PCA)).